The primary structure comprises 467 residues: MLLLLLLPLLWGRERVEGQKSNRKDYSLTMQSSVTVQEGMCVHVRCSFSYPVDSQTDSDPVHGYWFRAGNDISWKAPVATNNPAWAVQEETRDRFHLLGDPQTKNCTLSIRDARMSDAGRYFFRMEKGNIKWNYKYDQLSVNVTALTHRPNILIPGTLESGCFQNLTCSVPWACEQGTPPMISWMGTSVSPLHPSTTRSSVLTLIPQPQHHGTSLTCQVTLPGAGVTTNRTIQLNVSYPPQNLTVTVFQGEGTASTALGNSSSLSVLEGQSLRLVCAVDSNPPARLSWTWRSLTLYPSQPSNPLVLELQVHLGDEGEFTCRAQNSLGSQHVSLNLSLQQEYTGKMRPVSGVLLGAVGGAGATALVFLSFCVIFIVVRSCRKKSARPAADVGDIGMKDANTIRGSASQGNLTESWADDNPRHHGLAAHSSGEEREIQYAPLSFHKGEPQDLSGQEATNNEYSEIKIPK.

An N-terminal signal peptide occupies residues 1–18; the sequence is MLLLLLLPLLWGRERVEG. Over 19 to 353 the chain is Extracellular; it reads QKSNRKDYSL…KMRPVSGVLL (335 aa). The 84-residue stretch at 39–122 folds into the Ig-like V-type domain; the sequence is GMCVHVRCSF…ARMSDAGRYF (84 aa). C46 and C106 are joined by a disulfide. N105 carries an N-linked (GlcNAc...) asparagine glycan. N-acetylneuraminate-binding positions include R124 and 131 to 135; that span reads KWNYK. 2 N-linked (GlcNAc...) asparagine glycosylation sites follow: N142 and N165. In terms of domain architecture, Ig-like C2-type 1 spans 150–233; it reads PNILIPGTLE…AGVTTNRTIQ (84 aa). A disulfide bridge connects residues C168 and C217. Residues N229, N235, N242, and N260 are each glycosylated (N-linked (GlcNAc...) asparagine). The region spanning 240-336 is the Ig-like C2-type 2 domain; it reads PQNLTVTVFQ…GSQHVSLNLS (97 aa). An intrachain disulfide couples C276 to C320. N-linked (GlcNAc...) asparagine glycosylation is present at N334. A helical membrane pass occupies residues 354–376; sequence GAVGGAGATALVFLSFCVIFIVV. Residues 377–467 lie on the Cytoplasmic side of the membrane; sequence RSCRKKSARP…NEYSEIKIPK (91 aa). Residues 401-412 show a composition bias toward polar residues; that stretch reads IRGSASQGNLTE. Positions 401–431 are disordered; it reads IRGSASQGNLTESWADDNPRHHGLAAHSSGE. The residue at position 429 (S429) is a Phosphoserine. Residues 435-440 carry the ITIM motif motif; the sequence is IQYAPL. The segment at 443–467 is disordered; that stretch reads HKGEPQDLSGQEATNNEYSEIKIPK. Residues 450-460 show a composition bias toward polar residues; sequence LSGQEATNNEY.

The protein belongs to the immunoglobulin superfamily. SIGLEC (sialic acid binding Ig-like lectin) family. In terms of assembly, interacts with PTPN6/SHP-1 upon phosphorylation. Tyrosine phosphorylated. In terms of tissue distribution, predominantly expressed by resting and activated natural killer cells and at lower levels by granulocytes and monocytes. High expression found in placenta, liver, lung, spleen, and peripheral blood leukocytes.

Its subcellular location is the membrane. Putative adhesion molecule that mediates sialic-acid dependent binding to cells. Preferentially binds to alpha-2,3- and alpha-2,6-linked sialic acid. Also binds disialogangliosides (disialogalactosyl globoside, disialyl lactotetraosylceramide and disialyl GalNAc lactotetraoslylceramide). The sialic acid recognition site may be masked by cis interactions with sialic acids on the same cell surface. In the immune response, may act as an inhibitory receptor upon ligand induced tyrosine phosphorylation by recruiting cytoplasmic phosphatase(s) via their SH2 domain(s) that block signal transduction through dephosphorylation of signaling molecules. Mediates inhibition of natural killer cells cytotoxicity. May play a role in hemopoiesis. Inhibits differentiation of CD34+ cell precursors towards myelomonocytic cell lineage and proliferation of leukemic myeloid cells (in vitro). In Homo sapiens (Human), this protein is Sialic acid-binding Ig-like lectin 7 (SIGLEC7).